A 328-amino-acid chain; its full sequence is P2Y purinoceptor 6 (328 aa).

Topologically, residues 1 to 27 (MEQDNGTIQAPGLPPTTCVYREDFKRL) are extracellular. An N-linked (GlcNAc...) asparagine glycan is attached at asparagine 5. Residues 28-48 (LLTPVYSVVLVVGLPLNICVI) form a helical membrane-spanning segment. The Cytoplasmic portion of the chain corresponds to 49-62 (AQICASRRTLTRSA). Residues 63–83 (VYTLNLALADLMYACSLPLLI) traverse the membrane as a helical segment. The Extracellular segment spans residues 84–101 (YNYARGDHWPFGDLACRF). Residues cysteine 99 and cysteine 177 are joined by a disulfide bond. Residues 102 to 122 (VRFLFYANLHGSILFLTCISF) traverse the membrane as a helical segment. Over 123–144 (QRYLGICHPLASWHKRGGRRAA) the chain is Cytoplasmic. A helical transmembrane segment spans residues 145–165 (WVVCGVVWLAVTAQCLPTAVF). The Extracellular portion of the chain corresponds to 166-194 (AATGIQRNRTVCYDLSPPILSTRYLPYGM). Residue asparagine 173 is glycosylated (N-linked (GlcNAc...) asparagine). The helical transmembrane segment at 195–215 (ALTVIGFLLPFIALLACYCRM) threads the bilayer. At 216–236 (ARRLCRQDGPAGPVAQERRSK) the chain is on the cytoplasmic side. The chain crosses the membrane as a helical span at residues 237–257 (AARMAVVVAAVFAISFLPFHI). The Extracellular portion of the chain corresponds to 258–280 (TKTAYLAVRSTPGVSCPVLETFA). The helical transmembrane segment at 281–303 (AAYKGTRPFASVNSVLDPILFYF) threads the bilayer. Topologically, residues 304 to 328 (TQQKFRRQPHDLLQRLTAKWQRQRV) are cytoplasmic.

It belongs to the G-protein coupled receptor 1 family.

Its subcellular location is the cell membrane. Functionally, receptor for extracellular UTP &gt; ADP = 2-methylthio-ATP &gt; ADP-beta-S &gt; ATP = ATP-gamma-S. The activity of this receptor is mediated by G proteins which activate a phosphatidylinositol-calcium second messenger system. Functionally coupled to phospholipase C. The polypeptide is P2Y purinoceptor 6 (P2ry6) (Mus musculus (Mouse)).